The primary structure comprises 698 residues: Gametogenetin-binding protein 2 (698 aa).

Residues 555–575 (CMADPGNRETSGNTTHTEFHR) form a disordered region.

It localises to the cytoplasm. In terms of biological role, may be involved in spermatogenesis. This is Gametogenetin-binding protein 2 (GGNBP2) from Gallus gallus (Chicken).